The primary structure comprises 391 residues: uncharacterized protein (391 aa).

One can recognise an OBG-type G domain in the interval 85 to 314 (ATAAFVGFPS…LKEKIYEKLG (230 aa)). Residues 91–98 (GFPSVGKS), 137–141 (DAPGI), and 267–270 (NKID) contribute to the GTP site. The TGS domain occupies 314 to 389 (GFIKIYLKPQ…EDGDILTIVI (76 aa)).

The protein belongs to the TRAFAC class OBG-HflX-like GTPase superfamily. OBG GTPase family.

This is an uncharacterized protein from Methanocaldococcus jannaschii (strain ATCC 43067 / DSM 2661 / JAL-1 / JCM 10045 / NBRC 100440) (Methanococcus jannaschii).